Reading from the N-terminus, the 591-residue chain is Probable acetolactate synthase large subunit (591 aa).

Glu-47 serves as a coordination point for thiamine diphosphate. Residues Arg-149, 258–279 (HGTK…IGCR), and 301–320 (DIDP…IVGD) each bind FAD. Residues 396-476 (QNQMWMAHFF…VVICIFDNRT (81 aa)) are thiamine pyrophosphate binding. Residues Asp-447 and Asn-474 each coordinate Mg(2+).

This sequence belongs to the TPP enzyme family. Dimer of large and small chains. Mg(2+) is required as a cofactor. The cofactor is thiamine diphosphate.

It carries out the reaction 2 pyruvate + H(+) = (2S)-2-acetolactate + CO2. Its pathway is amino-acid biosynthesis; L-isoleucine biosynthesis; L-isoleucine from 2-oxobutanoate: step 1/4. It participates in amino-acid biosynthesis; L-valine biosynthesis; L-valine from pyruvate: step 1/4. This Methanocaldococcus jannaschii (strain ATCC 43067 / DSM 2661 / JAL-1 / JCM 10045 / NBRC 100440) (Methanococcus jannaschii) protein is Probable acetolactate synthase large subunit (ilvB).